The primary structure comprises 527 residues: Glutamate--cysteine ligase (527 aa).

Belongs to the glutamate--cysteine ligase type 1 family. Type 1 subfamily.

The catalysed reaction is L-cysteine + L-glutamate + ATP = gamma-L-glutamyl-L-cysteine + ADP + phosphate + H(+). Its pathway is sulfur metabolism; glutathione biosynthesis; glutathione from L-cysteine and L-glutamate: step 1/2. The chain is Glutamate--cysteine ligase from Pseudomonas aeruginosa (strain ATCC 15692 / DSM 22644 / CIP 104116 / JCM 14847 / LMG 12228 / 1C / PRS 101 / PAO1).